Reading from the N-terminus, the 182-residue chain is uncharacterized protein (182 aa).

Positions 1-170 (MIVKIIKGDI…IFVNIFEREL (170 aa)) constitute a Macro domain.

This is an uncharacterized protein from Sulfurisphaera tokodaii (strain DSM 16993 / JCM 10545 / NBRC 100140 / 7) (Sulfolobus tokodaii).